Here is a 420-residue protein sequence, read N- to C-terminus: Protein TabA (420 aa).

The residue at position 57 (lysine 57) is an N6-(pyridoxal phosphate)lysine.

The protein belongs to the Orn/Lys/Arg decarboxylase class-II family. Pyridoxal 5'-phosphate is required as a cofactor.

Functionally, involved in tabtoxin production and pathogenicity. The protein is Protein TabA (tabA) of Pseudomonas amygdali pv. tabaci (Pseudomonas syringae pv. tabaci).